The chain runs to 118 residues: Ribosome-binding factor A (118 aa).

The protein belongs to the RbfA family. Monomer. Binds 30S ribosomal subunits, but not 50S ribosomal subunits or 70S ribosomes.

It is found in the cytoplasm. Functionally, one of several proteins that assist in the late maturation steps of the functional core of the 30S ribosomal subunit. Associates with free 30S ribosomal subunits (but not with 30S subunits that are part of 70S ribosomes or polysomes). Required for efficient processing of 16S rRNA. May interact with the 5'-terminal helix region of 16S rRNA. The chain is Ribosome-binding factor A from Geobacter metallireducens (strain ATCC 53774 / DSM 7210 / GS-15).